The primary structure comprises 826 residues: E3 ubiquitin ligase PARAQUAT TOLERANCE 3 (826 aa).

A DWNN domain is found at 3 to 76 (IYYKFKSARD…NTSVLIRRVP (74 aa)). Residues 203-216 (CHRCNVSGHFIQHC) form a CCHC-type zinc finger. Position 278 is a phosphoserine (S278). The RING-type; degenerate zinc finger occupies 288-326 (CPLCKEVMRDAALASKCCLKSYCDKCIRDHIIAKSMCVC). Composition is skewed to polar residues over residues 356 to 365 (SAENAGSMCQ), 396 to 406 (PSNNNETSTLK), and 435 to 454 (NIQG…NTQP). Disordered stretches follow at residues 356 to 406 (SAEN…STLK), 435 to 488 (NIQG…GPDY), and 585 to 826 (HPIM…RARA). S397 is subject to Phosphoserine. The span at 588–624 (MGREEFEAKKTEMKRKRENEIRRSEGGNVVRDSEKSR) shows a compositional bias: basic and acidic residues. The span at 625–635 (IMNNSAVTSSP) shows a compositional bias: polar residues. Residues 651–667 (DYDRRRRSDRSSPERQS) are compositionally biased toward basic and acidic residues. 2 consecutive short sequence motifs (nuclear localization signal) follow at residues 668–675 (SRRFTSPP) and 695–702 (DRRRDRPR). The segment covering 680-706 (RKSERDRHHDLDSEHDRRRDRPRETDR) has biased composition (basic and acidic residues). A compositionally biased stretch (basic residues) spans 790-799 (FKRKPSRYKR). S800 carries the post-translational modification Phosphoserine. Basic and acidic residues predominate over residues 809-826 (GDEHFRHSKRSKGERARA).

Interacts with PRMT13/PRMT4B in the nucleus. Expressed constitutively in both shoot and root tissues.

The protein resides in the nucleus. The catalysed reaction is S-ubiquitinyl-[E2 ubiquitin-conjugating enzyme]-L-cysteine + [acceptor protein]-L-lysine = [E2 ubiquitin-conjugating enzyme]-L-cysteine + N(6)-ubiquitinyl-[acceptor protein]-L-lysine.. E3 ubiquitin ligase acting as a negative regulator of oxidative stress tolerance, probably by mediating 26S proteasome-mediated degradation of PRMT13/PRMT4B, thus preventing APX1 and GPX1 accumulation via the reduction of histone H3 methylation (H3R17me2a). Confers sensitivity to cadmium CdCl(2) and salt NaCl stresses. This chain is E3 ubiquitin ligase PARAQUAT TOLERANCE 3, found in Arabidopsis thaliana (Mouse-ear cress).